A 127-amino-acid chain; its full sequence is MLFSGKYQLESQENFEAFRKAIGLPDELIQKGKDIKSISEIEENGDDFKVTITTGSKVIVNTFTVGKEAELETLTGEKAKGVVHRDGNKLKVSLKGIESVTELVDGNTIANTMTLGNIGYKRISKRV.

This sequence belongs to the calycin superfamily. Fatty-acid binding protein (FABP) family.

It is found in the cytoplasm. The chain is Fatty acid-binding protein, liver-type (fabp1) from Epinephelus coioides (Orange-spotted grouper).